A 163-amino-acid polypeptide reads, in one-letter code: Probable phosphotransferase enzyme IIB component M6_Spy0801 (163 aa).

The PTS EIIB type-4 domain maps to 1 to 163; the sequence is MITQIRVDDR…TKVHLSQLVN (163 aa). The active-site Pros-phosphohistidine intermediate is H13.

It localises to the cytoplasm. Its function is as follows. The phosphoenolpyruvate-dependent sugar phosphotransferase system (sugar PTS), a major carbohydrate active -transport system, catalyzes the phosphorylation of incoming sugar substrates concomitantly with their translocation across the cell membrane. The polypeptide is Probable phosphotransferase enzyme IIB component M6_Spy0801 (Streptococcus pyogenes serotype M6 (strain ATCC BAA-946 / MGAS10394)).